Here is an 849-residue protein sequence, read N- to C-terminus: Rho guanine nucleotide exchange factor 15 (849 aa).

Disordered stretches follow at residues 1 to 146 (MSAQ…ASAP), 159 to 202 (GAEG…NGTP), and 277 to 308 (LPPLKPPKPTKVRQDISTSEELPQPDLKLPSE). The segment covering 18–31 (RIIRPRPPSRHRAP) has biased composition (basic residues). Polar residues predominate over residues 48-59 (QISNDASASVCT). Over residues 65–110 (PPTASLKPPALLPPSVSRTSLDSQTSPDSPSSTPSPSPVSRRSISP) the composition is skewed to low complexity. Phosphoserine is present on residues Ser107 and Ser109. Positions 111-123 (EPAPCSPVPPPKP) are enriched in pro residues. Over residues 164 to 180 (AQSSDSLERCSQGSTEV) the composition is skewed to polar residues. Tyr361 is modified (phosphotyrosine; by EPHB2). The region spanning 425–609 (RMQESLFEVV…SKIIERCSAE (185 aa)) is the DH domain. Polar residues-rich tracts occupy residues 771–786 (CSEPSTPSKTEGQSLE) and 840–849 (SSGTPDTPQP). 2 disordered regions span residues 771–803 (CSEPSTPSKTEGQSLESKAPRKHLHKNPEGWLK) and 819–849 (GEHERRKHLRQHQKLLEAVGPSSGTPDTPQP).

As to quaternary structure, interacts with EPHA4. Interacts with EPHB2. Post-translationally, phosphorylated on tyrosine residues upon EFNA1 stimulation. EPHB2-dependent phosphorylation at Tyr-361 triggers UBE3A-mediated ubiquitination. Ubiquitinated; UBE3A-mediated ubiquitination and degradation by the proteasome promotes EFNB1-dependent synapse formation. At P12, expressed is detected in the CA1 region and the dentate gyrus of the hippocampus.

It localises to the cell projection. The protein localises to the dendrite. Functionally, specific GEF for RhoA activation. Does not activate RAC1 or CDC42. Regulates vascular smooth muscle contractility. Negatively regulates excitatory synapse development by suppressing the synapse-promoting activity of EPHB2. This Mus musculus (Mouse) protein is Rho guanine nucleotide exchange factor 15 (Arhgef15).